Consider the following 181-residue polypeptide: Adenylate kinase (181 aa).

An ATP-binding site is contributed by 10–15 (GAGKGT). Residues 30–59 (STGELFRRNIEEGTKLGVEAKRYLDAGDLV) are NMP. Residues Thr31, Arg36, 57–59 (DLV), 85–88 (GYPR), and Gln92 contribute to the AMP site. Positions 126–132 (GRGRADD) are LID. Residue Arg127 participates in ATP binding. 2 residues coordinate AMP: Arg129 and Arg140. Gly166 is a binding site for ATP.

This sequence belongs to the adenylate kinase family. As to quaternary structure, monomer.

Its subcellular location is the cytoplasm. It catalyses the reaction AMP + ATP = 2 ADP. The protein operates within purine metabolism; AMP biosynthesis via salvage pathway; AMP from ADP: step 1/1. Functionally, catalyzes the reversible transfer of the terminal phosphate group between ATP and AMP. Plays an important role in cellular energy homeostasis and in adenine nucleotide metabolism. The chain is Adenylate kinase from Mycobacterium tuberculosis (strain ATCC 25177 / H37Ra).